A 312-amino-acid chain; its full sequence is Carbonic anhydrase 4 (312 aa).

A signal peptide spans 1-18 (MRLLLALLVLAAAPPQAR). Positions 21-285 (SHWCYQIQVK…LGQRQVFRSG (265 aa)) constitute an Alpha-carbonic anhydrase domain. 2 disulfides stabilise this stretch: Cys-24/Cys-36 and Cys-46/Cys-229. Asn-33 carries N-linked (GlcNAc...) asparagine glycosylation. The active-site Proton donor/acceptor is the His-88. Residues His-115, His-117, and His-140 each coordinate Zn(2+). N-linked (GlcNAc...) asparagine glycosylation is found at Asn-152 and Asn-195. 225–226 (TT) provides a ligand contact to substrate. N-linked (GlcNAc...) asparagine glycosylation occurs at Asn-265. Ser-284 carries GPI-anchor amidated serine lipidation. A propeptide spans 285-312 (GAPGLLLAQPLPTLLAPVLACLTVGFLR) (removed in mature form).

The protein belongs to the alpha-carbonic anhydrase family. In terms of assembly, interacts with SLC4A4. Zn(2+) is required as a cofactor.

The protein resides in the cell membrane. It catalyses the reaction hydrogencarbonate + H(+) = CO2 + H2O. Inhibited by acetazolamide. Functionally, catalyzes the reversible hydration of carbon dioxide into bicarbonate and protons and thus is essential to maintaining intracellular and extracellular pH. May stimulate the sodium/bicarbonate transporter activity of SLC4A4 that acts in pH homeostasis. It is essential for acid overload removal from the retina and retina epithelium, and acid release in the choriocapillaris in the choroid. The sequence is that of Carbonic anhydrase 4 (CA4) from Bos taurus (Bovine).